A 285-amino-acid chain; its full sequence is Diphthine methyl ester synthase (285 aa).

S-adenosyl-L-methionine contacts are provided by residues L9, D84, G87, 112–113 (SI), and L163. Residue S171 is modified to Phosphoserine. Residues V225 and H250 each coordinate S-adenosyl-L-methionine.

It belongs to the diphthine synthase family.

The enzyme catalyses 2-[(3S)-amino-3-carboxypropyl]-L-histidyl-[translation elongation factor 2] + 4 S-adenosyl-L-methionine = diphthine methyl ester-[translation elongation factor 2] + 4 S-adenosyl-L-homocysteine + 3 H(+). The protein operates within protein modification; peptidyl-diphthamide biosynthesis. In terms of biological role, S-adenosyl-L-methionine-dependent methyltransferase that catalyzes four methylations of the modified target histidine residue in translation elongation factor 2 (EF-2), to form an intermediate called diphthine methyl ester. The four successive methylation reactions represent the second step of diphthamide biosynthesis. This is Diphthine methyl ester synthase (DPH5) from Homo sapiens (Human).